The sequence spans 719 residues: MQSLDRVDLCESLLTWIQTFHVDAPCKTVEDLTSGVAMAMVLQKIDPVYFDENWLNRIKTDVGDNWRLKISNLKKILKGILDYNHEILGHQVNDFTLPDVILIGEHSDASELGRMLQLILGCAVKCEQKQEYIQAIMMMEESVQHVVMTAIQELMSKETPVSIGTDAYAELDRQLKKANEELNDALSAKEEIAQRCHELDMQVAGLQEEKSSLLAENQILMERMNQSDSLEDPNSPAGRRHLQLQTQLEQLQEETFRLEASKDDYRIRCEELEKEITEFRQQNEDLITLADEAQSLKDEMDVLRHSSDKVAKLESQVDSYKKKLEDLGDLRRQVKLLEEKNTMYMQNTVSLEEELRKANAARSQLETYKRQVVELQNRLSEESKKADKLEFEYKRLKEKIDSLQKEKDRLRSERDSLKETIEELRCVQAQEGQLTSAGLMPLGNQEPTDSLAAEIVTPEIKEKLIRLQHENKMLKINQEGSDNEKISLLQSLLDDANMRKNELETENRLVNQRLIEMQSQVEELQKSLQEQGAKTEDSLLLKKKLEEHLEKLHEANNELQKKRAIIEDLEPRYNNSSMKIEELQDALRKKEEDMKQMEERYKKYLEKAKSVIRTLDPKQNQGTGPEIQALKNQLQERDKMFVSLEKEFEKTKTQRDQEEKLIVSAWYNMGMTLHKKAAEDRLASTGSGQSFLARQRQATSSRRSYPGHVQPATASDVIA.

The region spanning 7–123 is the Calponin-homology (CH) domain; the sequence is VDLCESLLTW…RMLQLILGCA (117 aa). Coiled coils occupy residues 162–431 and 459–665; these read SIGT…QAQE and EIKE…IVSA. The segment at 679–719 is disordered; the sequence is EDRLASTGSGQSFLARQRQATSSRRSYPGHVQPATASDVIA. The segment covering 693-704 has biased composition (low complexity); the sequence is ARQRQATSSRRS.

Belongs to the hook family. Interacts with microtubules.

Its subcellular location is the cytoplasm. It localises to the cytoskeleton. It is found in the golgi apparatus. In terms of biological role, acts as an adapter protein linking the dynein motor complex to various cargos and converts dynein from a non-processive to a highly processive motor in the presence of dynactin. Facilitates the interaction between dynein and dynactin and activates dynein processivity (the ability to move along a microtubule for a long distance without falling off the track). Predominantly recruits 2 dyneins, which increases both the force and speed of the microtubule motor. Component of the FTS/Hook/FHIP complex (FHF complex). The FHF complex may function to promote vesicle trafficking and/or fusion via the homotypic vesicular protein sorting complex (the HOPS complex). May regulate clearance of endocytosed receptors such as MSR1. Participates in defining the architecture and localization of the Golgi complex. FHF complex promotes the distribution of AP-4 complex to the perinuclear area of the cell. The polypeptide is Protein Hook homolog 3 (hook3) (Xenopus laevis (African clawed frog)).